Reading from the N-terminus, the 734-residue chain is Photosystem I P700 chlorophyll a apoprotein A2 (734 aa).

The next 8 membrane-spanning stretches (helical) occupy residues 46–69 (IFAS…FHVA), 135–158 (LYQG…LHLQ), 175–199 (LNHH…HVAI), 273–291 (IAHH…GHQY), 330–353 (LHFQ…QHMY), 369–395 (AALY…IFFI), 417–439 (AIIS…LYVH), and 517–535 (FLVH…LILV). 2 residues coordinate [4Fe-4S] cluster: C559 and C568. 2 consecutive transmembrane segments (helical) span residues 575-596 (AFYL…YWHW) and 643-665 (LSVW…MFLI). Chlorophyll a-binding residues include H654, M662, and Y670. W671 is a binding site for phylloquinone. Residues 707–727 (LVGLAHFSVGYIFTYAAFLIA) traverse the membrane as a helical segment.

This sequence belongs to the PsaA/PsaB family. The PsaA/B heterodimer binds the P700 chlorophyll special pair and subsequent electron acceptors. PSI consists of a core antenna complex that captures photons, and an electron transfer chain that converts photonic excitation into a charge separation. The eukaryotic PSI reaction center is composed of at least 11 subunits. It depends on P700 is a chlorophyll a/chlorophyll a' dimer, A0 is one or more chlorophyll a, A1 is one or both phylloquinones and FX is a shared 4Fe-4S iron-sulfur center. as a cofactor.

It localises to the plastid. It is found in the chloroplast thylakoid membrane. The catalysed reaction is reduced [plastocyanin] + hnu + oxidized [2Fe-2S]-[ferredoxin] = oxidized [plastocyanin] + reduced [2Fe-2S]-[ferredoxin]. PsaA and PsaB bind P700, the primary electron donor of photosystem I (PSI), as well as the electron acceptors A0, A1 and FX. PSI is a plastocyanin-ferredoxin oxidoreductase, converting photonic excitation into a charge separation, which transfers an electron from the donor P700 chlorophyll pair to the spectroscopically characterized acceptors A0, A1, FX, FA and FB in turn. Oxidized P700 is reduced on the lumenal side of the thylakoid membrane by plastocyanin. The polypeptide is Photosystem I P700 chlorophyll a apoprotein A2 (Chaetosphaeridium globosum (Charophycean green alga)).